The following is a 567-amino-acid chain: Signal transducer and activator of transcription b (567 aa).

An SH2 domain is found at 449 to 548 (WYDGLVYGFC…LGGRNKPRIR (100 aa)).

This sequence belongs to the transcription factor STAT family. As to quaternary structure, may interact with sodium-dependent transporter snf-12; the interaction is probably direct.

It localises to the cytoplasm. The protein resides in the nucleus. Its subcellular location is the vesicle. Carries out a dual function: signal transduction and activation of transcription. Required, in concert with transcription factor elt-3, for up-regulation of the vacuolar H(+)-ATPase and acceleration of lysosome maturation at molt. As part of the innate immune response to molting and injury of the adult epidermis, positively regulates the expression of epidermal antimicrobial peptides, such as nlp-29. Through positively modulating the expression of epidermal antimicrobial peptides, such as nlp-29, plays a role in resistance to fungal infection and in the response to physical wounding and phorbol ester PMA treatment. Functions cell autonomously in the epidermis, in concert with sodium-dependent transporter snf-12, probably acting at vesicular membranes, downstream of a p38 MAPK/pmk-1 pathway. This Caenorhabditis elegans protein is Signal transducer and activator of transcription b.